Here is a 187-residue protein sequence, read N- to C-terminus: UPF0301 protein SO_3346 (187 aa).

This sequence belongs to the UPF0301 (AlgH) family.

The chain is UPF0301 protein SO_3346 from Shewanella oneidensis (strain ATCC 700550 / JCM 31522 / CIP 106686 / LMG 19005 / NCIMB 14063 / MR-1).